A 529-amino-acid chain; its full sequence is Bifunctional purine biosynthesis protein PurH (529 aa).

The MGS-like domain occupies 1-148 (MQQRRPVRRA…KNHKDVAIVV (148 aa)). Lys-287 carries the post-translational modification N6-acetyllysine.

This sequence belongs to the PurH family.

The enzyme catalyses (6R)-10-formyltetrahydrofolate + 5-amino-1-(5-phospho-beta-D-ribosyl)imidazole-4-carboxamide = 5-formamido-1-(5-phospho-D-ribosyl)imidazole-4-carboxamide + (6S)-5,6,7,8-tetrahydrofolate. It carries out the reaction IMP + H2O = 5-formamido-1-(5-phospho-D-ribosyl)imidazole-4-carboxamide. It participates in purine metabolism; IMP biosynthesis via de novo pathway; 5-formamido-1-(5-phospho-D-ribosyl)imidazole-4-carboxamide from 5-amino-1-(5-phospho-D-ribosyl)imidazole-4-carboxamide (10-formyl THF route): step 1/1. Its pathway is purine metabolism; IMP biosynthesis via de novo pathway; IMP from 5-formamido-1-(5-phospho-D-ribosyl)imidazole-4-carboxamide: step 1/1. This chain is Bifunctional purine biosynthesis protein PurH, found in Escherichia coli O45:K1 (strain S88 / ExPEC).